We begin with the raw amino-acid sequence, 261 residues long: Snake venom serine protease (261 aa).

A signal peptide spans 1–20 (MALIGVLANLLILCLSYART). Residues 21-24 (APDR) constitute a propeptide that is removed on maturation. Residues 25-249 (IIGGLECNQN…YIDWIQDIMA (225 aa)) enclose the Peptidase S1 domain. Cystine bridges form between cysteine 31–cysteine 163, cysteine 50–cysteine 66, cysteine 98–cysteine 256, cysteine 142–cysteine 210, cysteine 174–cysteine 189, and cysteine 200–cysteine 225. Histidine 65 functions as the Charge relay system in the catalytic mechanism. N-linked (GlcNAc...) asparagine glycosylation occurs at asparagine 103. The active-site Charge relay system is aspartate 110. N-linked (GlcNAc...) asparagine glycosylation is found at asparagine 117 and asparagine 121. Serine 204 (charge relay system) is an active-site residue.

This sequence belongs to the peptidase S1 family. Snake venom subfamily. Monomer. In terms of tissue distribution, expressed by the venom gland.

The protein localises to the secreted. In terms of biological role, snake venom serine protease that may act in the hemostasis system of the prey. This Philodryas olfersii (Green snake) protein is Snake venom serine protease.